The chain runs to 563 residues: Arginine--tRNA ligase (563 aa).

The 'HIGH' region signature appears at 121 to 131 (PNIAKPFSIGH).

This sequence belongs to the class-I aminoacyl-tRNA synthetase family. Monomer.

The protein resides in the cytoplasm. It carries out the reaction tRNA(Arg) + L-arginine + ATP = L-arginyl-tRNA(Arg) + AMP + diphosphate. The protein is Arginine--tRNA ligase of Streptococcus agalactiae serotype III (strain NEM316).